A 1295-amino-acid chain; its full sequence is Phosphoribosylformylglycinamidine synthase (1295 aa).

Residues 304–326 (WPGAATGSGGEIRDEGATGRGAK) form a disordered region. Residues 306 to 317 (GAATGSGGEIRD), 385 to 387 (TGY), and Ala677 contribute to the ATP site. Residues Asp678, Glu717, Asn721, and Asp884 each contribute to the Mg(2+) site. Residues 995–1012 (LRDNPESADQEHASRQDD) show a composition bias toward basic and acidic residues. The tract at residues 995–1017 (LRDNPESADQEHASRQDDNDPGL) is disordered. The 254-residue stretch at 1042–1295 (VAVLREQGVN…LFRNARKQLG (254 aa)) folds into the Glutamine amidotransferase type-1 domain. Cys1135 (nucleophile) is an active-site residue. Active-site residues include His1260 and Glu1262.

This sequence in the N-terminal section; belongs to the FGAMS family. As to quaternary structure, monomer.

It is found in the cytoplasm. The catalysed reaction is N(2)-formyl-N(1)-(5-phospho-beta-D-ribosyl)glycinamide + L-glutamine + ATP + H2O = 2-formamido-N(1)-(5-O-phospho-beta-D-ribosyl)acetamidine + L-glutamate + ADP + phosphate + H(+). The protein operates within purine metabolism; IMP biosynthesis via de novo pathway; 5-amino-1-(5-phospho-D-ribosyl)imidazole from N(2)-formyl-N(1)-(5-phospho-D-ribosyl)glycinamide: step 1/2. Phosphoribosylformylglycinamidine synthase involved in the purines biosynthetic pathway. Catalyzes the ATP-dependent conversion of formylglycinamide ribonucleotide (FGAR) and glutamine to yield formylglycinamidine ribonucleotide (FGAM) and glutamate. The protein is Phosphoribosylformylglycinamidine synthase of Sodalis glossinidius (strain morsitans).